We begin with the raw amino-acid sequence, 82 residues long: Putative membrane protein insertion efficiency factor (82 aa).

The protein belongs to the UPF0161 family.

It localises to the cell inner membrane. In terms of biological role, could be involved in insertion of integral membrane proteins into the membrane. This chain is Putative membrane protein insertion efficiency factor, found in Synechococcus elongatus (strain ATCC 33912 / PCC 7942 / FACHB-805) (Anacystis nidulans R2).